Reading from the N-terminus, the 933-residue chain is Valine--tRNA ligase (933 aa).

A disordered region spans residues 1–24 (MIERVKTTKLSEASGLPKTYDPVG). The 'HIGH' region motif lies at 57 to 67 (PNVTGSLHMGH). Positions 557-561 (KMSKS) match the 'KMSKS' region motif. K560 serves as a coordination point for ATP. Residues 866-932 (LIDIASLRSR…RLVKERLMGL (67 aa)) are a coiled coil.

Belongs to the class-I aminoacyl-tRNA synthetase family. ValS type 1 subfamily. In terms of assembly, monomer.

Its subcellular location is the cytoplasm. It catalyses the reaction tRNA(Val) + L-valine + ATP = L-valyl-tRNA(Val) + AMP + diphosphate. Its function is as follows. Catalyzes the attachment of valine to tRNA(Val). As ValRS can inadvertently accommodate and process structurally similar amino acids such as threonine, to avoid such errors, it has a 'posttransfer' editing activity that hydrolyzes mischarged Thr-tRNA(Val) in a tRNA-dependent manner. The chain is Valine--tRNA ligase from Prochlorococcus marinus (strain NATL2A).